The following is a 102-amino-acid chain: uncharacterized protein (102 aa).

Positions 77-102 are disordered; sequence RKDGDEKSKPNSKDYASRPIRDHSKI.

This is an uncharacterized protein from Microplitis demolitor (Parasitoid wasp).